The sequence spans 174 residues: MNRTEKEQVIGELHEKMAKAKAAIVAEPKGLNVAVVTDLRKKLRDAKIDYRIVKNTLAARAAKGTPVEPVADRFVGPTALVMSYDDVVTPAKLLADFMKDRENFVIRTAIIEGKVVDAKGVQALAKLPGLKELRGQIAAMIAQPATKLARLVGTPGQQLARVVGARHEQLEKQG.

It belongs to the universal ribosomal protein uL10 family. In terms of assembly, part of the ribosomal stalk of the 50S ribosomal subunit. The N-terminus interacts with L11 and the large rRNA to form the base of the stalk. The C-terminus forms an elongated spine to which L12 dimers bind in a sequential fashion forming a multimeric L10(L12)X complex.

Functionally, forms part of the ribosomal stalk, playing a central role in the interaction of the ribosome with GTP-bound translation factors. This is Large ribosomal subunit protein uL10 from Anaeromyxobacter dehalogenans (strain 2CP-C).